A 211-amino-acid polypeptide reads, in one-letter code: MSHGHSHGGGGCRCAAEREEPPEQRGLAYGLYLRIDLERLQCLNESREGSGRGVFKPWEERTDRSKFVESDADEELLFNIPFTGNVKLKGVIIMGEDDDSHPSEMRLYKNIPQMSFDDTEREPEQTFSLNRDITGELEYATKISRFSNVYHLSIHISKNFGADTTKIFYIGLRGEWTELRRHEVTICNYEASANPADHRVHQVTPQTHFIS.

Residues 1-20 (MSHGHSHGGGGCRCAAEREE) are disordered. Positions 20–192 (EPPEQRGLAY…EVTICNYEAS (173 aa)) constitute a PITH domain. Y189 carries the post-translational modification Phosphotyrosine.

Belongs to the PITHD1 family.

The protein resides in the cytoplasm. Promotes megakaryocyte differentiation by up-regulating RUNX1 expression. Regulates RUNX1 expression by activating the proximal promoter of the RUNX1 gene and by enhancing the translation activity of an internal ribosome entry site (IRES) element in the RUNX1 gene. This chain is PITH domain-containing protein 1 (Pithd1), found in Mus musculus (Mouse).